We begin with the raw amino-acid sequence, 203 residues long: 8-oxoguanine DNA glycosylase/AP lyase (203 aa).

Residues Lys128 and Asp146 contribute to the active site.

The protein belongs to the type-2 OGG1 family.

The enzyme catalyses 2'-deoxyribonucleotide-(2'-deoxyribose 5'-phosphate)-2'-deoxyribonucleotide-DNA = a 3'-end 2'-deoxyribonucleotide-(2,3-dehydro-2,3-deoxyribose 5'-phosphate)-DNA + a 5'-end 5'-phospho-2'-deoxyribonucleoside-DNA + H(+). In terms of biological role, catalyzes the excision of an oxidatively damaged form of guanine (7,8-dihydro-8-oxoguanine = 8-oxoG) from DNA. Also cleaves the DNA backbone at apurinic/apyrimidinic sites (AP sites). This Sulfolobus acidocaldarius (strain ATCC 33909 / DSM 639 / JCM 8929 / NBRC 15157 / NCIMB 11770) protein is 8-oxoguanine DNA glycosylase/AP lyase.